Reading from the N-terminus, the 246-residue chain is Major prion protein (246 aa).

Residues 1–15 form the signal peptide; it reads MLVLFVATWSDLGLC. Residues 16–223 form an interaction with GRB2, ERI3 and SYN1 region; the sequence is KKRPKPGGWN…ESQAYYQRGS (208 aa). A disordered region spans residues 18 to 102; that stretch reads RPKPGGWNTG…HKPSKPKTSM (85 aa). A run of 5 repeats spans residues 44–52, 53–60, 61–68, 69–76, and 77–84. The tract at residues 44-84 is 5 X 8 AA tandem repeats of P-H-G-G-G-W-G-Q; the sequence is PQGGGGWGQPHGGGWGQPHGGGWGQPHGGGWGQPHGGGWGQ. Positions 45–88 are enriched in gly residues; that stretch reads QGGGGWGQPHGGGWGQPHGGGWGQPHGGGWGQPHGGGWGQGGGT. Cu(2+) is bound by residues H54, G55, G56, H62, G63, G64, H70, G71, G72, H78, G79, and G80. Positions 91–102 are enriched in basic residues; it reads QWHKPSKPKTSM. Residues C172 and C207 are joined by a disulfide bond. Residues N174 and N190 are each glycosylated (N-linked (GlcNAc...) asparagine). S223 carries the GPI-anchor amidated serine lipid modification. Positions 224–246 are cleaved as a propeptide — removed in mature form; that stretch reads SMVLFSSPPVILLISFLIFLIVG.

This sequence belongs to the prion family. In terms of assembly, monomer and homodimer. Has a tendency to aggregate into amyloid fibrils containing a cross-beta spine, formed by a steric zipper of superposed beta-strands. Soluble oligomers may represent an intermediate stage on the path to fibril formation. Copper binding may promote oligomerization. Interacts with GRB2, APP, ERI3/PRNPIP and SYN1. Mislocalized cytosolically exposed PrP interacts with MGRN1; this interaction alters MGRN1 subcellular location and causes lysosomal enlargement. Interacts with KIAA1191.

The protein resides in the cell membrane. It localises to the golgi apparatus. In terms of biological role, its primary physiological function is unclear. Has cytoprotective activity against internal or environmental stresses. May play a role in neuronal development and synaptic plasticity. May be required for neuronal myelin sheath maintenance. May play a role in iron uptake and iron homeostasis. Soluble oligomers are toxic to cultured neuroblastoma cells and induce apoptosis (in vitro). Association with GPC1 (via its heparan sulfate chains) targets PRNP to lipid rafts. Also provides Cu(2+) or Zn(2+) for the ascorbate-mediated GPC1 deaminase degradation of its heparan sulfate side chains. This Cercocebus atys (Sooty mangabey) protein is Major prion protein (PRNP).